Consider the following 281-residue polypeptide: Bifunctional protein FolD (281 aa).

Residues 165–167 (GRG), threonine 192, and valine 233 contribute to the NADP(+) site.

It belongs to the tetrahydrofolate dehydrogenase/cyclohydrolase family. In terms of assembly, homodimer.

The enzyme catalyses (6R)-5,10-methylene-5,6,7,8-tetrahydrofolate + NADP(+) = (6R)-5,10-methenyltetrahydrofolate + NADPH. It carries out the reaction (6R)-5,10-methenyltetrahydrofolate + H2O = (6R)-10-formyltetrahydrofolate + H(+). Its pathway is one-carbon metabolism; tetrahydrofolate interconversion. Functionally, catalyzes the oxidation of 5,10-methylenetetrahydrofolate to 5,10-methenyltetrahydrofolate and then the hydrolysis of 5,10-methenyltetrahydrofolate to 10-formyltetrahydrofolate. The polypeptide is Bifunctional protein FolD (Mycobacterium ulcerans (strain Agy99)).